Reading from the N-terminus, the 488-residue chain is MNLAEICENAKKGREYALLGNYDSSMVYYQGVIQQIQRHCQSLRDPATKAKWQQVRQELLEEYEQVKSIVSTLESFKMDKPPDFPVSCRDEPFRDPAVWPPPVPAEHRAPPQIRRPNREVRPLRKDMGAGARGLVGRAHQISKSDKAASRDKDYRARGRDDKARKNMQDGASDGEIPKFDGAGYDKDLVEALERDIVSRNPSIHWDDIADLEEAKKLLREAVVLPMWMPDFFKGIRRPWKGVLMVGPPGTGKTMLAKAVATECGTTFFNVSSSTLTSKYRGESEKLVRLLFEMARFYAPTTIFIDEIDSICSRRGTSDEHEASRRVKSELLIQMDGVGGALENDDPSKMVMVLAATNFPWDIDEALRRRLEKRIYIPLPTAKGRAELLKISLREVELDPDIHLEDIAEKTEGYSGADITNICRDASLMAMRRRINGLSPEEIRALSKEELQMPVTRGDLELALKKIAKSVSAADLEKYEKWMVEFGSA.

M1 carries the N-acetylmethionine modification. The segment at 128–179 (GAGARGLVGRAHQISKSDKAASRDKDYRARGRDDKARKNMQDGASDGEIPKF) is disordered. Basic and acidic residues predominate over residues 142 to 167 (SKSDKAASRDKDYRARGRDDKARKNM). Position 172 is a phosphoserine (S172). 246–253 (GPPGTGKT) provides a ligand contact to ATP.

The protein belongs to the AAA ATPase family. Katanin p60 subunit A1 subfamily. A-like 1 sub-subfamily. Interacts with KATNB1 and KATNBL1.

The protein localises to the cytoplasm. Its subcellular location is the cytoskeleton. It is found in the spindle pole. The protein resides in the spindle. The enzyme catalyses n ATP + n H2O + a microtubule = n ADP + n phosphate + (n+1) alpha/beta tubulin heterodimers.. In terms of biological role, regulates microtubule dynamics in Sertoli cells, a process that is essential for spermiogenesis and male fertility. Severs microtubules in an ATP-dependent manner, promoting rapid reorganization of cellular microtubule arrays. Has microtubule-severing activity in vitro. The protein is Katanin p60 ATPase-containing subunit A-like 1 (Katnal1) of Rattus norvegicus (Rat).